The following is a 274-amino-acid chain: 2,3,4,5-tetrahydropyridine-2,6-dicarboxylate N-succinyltransferase (274 aa).

Residues Arg104 and Asp141 each coordinate substrate.

This sequence belongs to the transferase hexapeptide repeat family. In terms of assembly, homotrimer.

It is found in the cytoplasm. It carries out the reaction (S)-2,3,4,5-tetrahydrodipicolinate + succinyl-CoA + H2O = (S)-2-succinylamino-6-oxoheptanedioate + CoA. Its pathway is amino-acid biosynthesis; L-lysine biosynthesis via DAP pathway; LL-2,6-diaminopimelate from (S)-tetrahydrodipicolinate (succinylase route): step 1/3. This chain is 2,3,4,5-tetrahydropyridine-2,6-dicarboxylate N-succinyltransferase, found in Shewanella oneidensis (strain ATCC 700550 / JCM 31522 / CIP 106686 / LMG 19005 / NCIMB 14063 / MR-1).